The following is a 151-amino-acid chain: RNA polymerase-binding transcription factor DksA (151 aa).

A coiled-coil region spans residues 33–54 (NEAQLAHFRRILEAWRNQLRDE). The Zn(2+) site is built by cysteine 114, cysteine 117, cysteine 135, and cysteine 138. A dksA C4-type zinc finger spans residues 114–138 (CESCGVEIGIRRLEARPTADLCIDC).

It belongs to the DksA family. Interacts directly with the RNA polymerase.

The protein resides in the cytoplasm. In terms of biological role, transcription factor that acts by binding directly to the RNA polymerase (RNAP). Required for negative regulation of rRNA expression and positive regulation of several amino acid biosynthesis promoters. Also required for regulation of fis expression. The chain is RNA polymerase-binding transcription factor DksA from Escherichia coli O157:H7.